The chain runs to 232 residues: Sugar fermentation stimulation protein homolog (232 aa).

Belongs to the SfsA family.

In Ruegeria sp. (strain TM1040) (Silicibacter sp.), this protein is Sugar fermentation stimulation protein homolog.